We begin with the raw amino-acid sequence, 970 residues long: Serine/threonine-protein kinase PLK4 (970 aa).

Positions 12-265 constitute a Protein kinase domain; the sequence is FKVGNLLGKG…LSSVLDHPFM (254 aa). Residues 18–26 and lysine 41 each bind ATP; that span reads LGKGSFAGV. N6-acetyllysine occurs at positions 45 and 46. Residue aspartate 136 is the Proton acceptor of the active site. 2 disordered regions span residues 323 to 458 and 497 to 538; these read TVFP…NHLC and SISP…HSVK. Over residues 328–356 the composition is skewed to polar residues; sequence NKSSTDFSSSGDGNSFYTQWGNQETSNSG. Positions 360–369 are enriched in basic and acidic residues; the sequence is VIQDAEERPH. Positions 379–393 are enriched in polar residues; that stretch reads SDRSGTSNSQSQAKT. Position 401 is a phosphoserine (serine 401). The span at 438–454 shows a compositional bias: polar residues; the sequence is SSSSGSFERPDNNQALS. The span at 504–515 shows a compositional bias: basic and acidic residues; that stretch reads FQGHPDLQKDTS. In terms of domain architecture, Cryptic POLO box 1 (CPB1) spans 586–699; the sequence is TLRSITSPLV…SRFVQLVRSK (114 aa). Serine 665 is modified (phosphoserine). A Cryptic POLO box 2 (CPB2) domain is found at 700-813; the sequence is SPKITYFTRY…GRKPGSTSSP (114 aa). Residues 808–828 form a disordered region; it reads GSTSSPKALSPPPSVDSNYPT. Serine 817 is modified (phosphoserine). In terms of domain architecture, POLO box spans 886 to 964; the sequence is QLLKSVFVKN…LSSILLMFSN (79 aa).

It belongs to the protein kinase superfamily. Ser/Thr protein kinase family. CDC5/Polo subfamily. In terms of assembly, homodimer. Interacts with CEP152 (via N-terminus). Interacts with CEP78; this interaction may be important for proper PLK4 localization to the centriole and PLK4-induced overduplication of centrioles. Interacts with CEP131. Interacts simultaneously with TENT5C and CEP192. Interacts with TENT5C; this interaction leads to the TENT5C recruitment in the centrosome. Interacts with CEP85; this interaction may be important in cell migration and centriole assembly. In terms of processing, acetylation by KAT2A and KAT2B impairs kinase activity by shifting the kinase to an inactive conformation. Post-translationally, ubiquitinated; leading to its degradation by the proteasome. Deubiquitinated by USP54; leading to PLK4 stabilization. Tyrosine-phosphorylated by TEC.

Its subcellular location is the cytoplasm. The protein resides in the cytoskeleton. The protein localises to the microtubule organizing center. It localises to the centrosome. It is found in the centriole. Its subcellular location is the nucleus. The protein resides in the nucleolus. The protein localises to the cleavage furrow. The enzyme catalyses L-seryl-[protein] + ATP = O-phospho-L-seryl-[protein] + ADP + H(+). It catalyses the reaction L-threonyl-[protein] + ATP = O-phospho-L-threonyl-[protein] + ADP + H(+). Serine/threonine-protein kinase that plays a central role in centriole duplication. Able to trigger procentriole formation on the surface of the parental centriole cylinder, leading to the recruitment of centriole biogenesis proteins such as SASS6, CPAP, CCP110, CEP135 and gamma-tubulin. When overexpressed, it is able to induce centrosome amplification through the simultaneous generation of multiple procentrioles adjoining each parental centriole during S phase. Phosphorylates 'Ser-151' of FBXW5 during the G1/S transition, leading to inhibit FBXW5 ability to ubiquitinate SASS6. Its central role in centriole replication suggests a possible role in tumorigenesis, centrosome aberrations being frequently observed in tumors. Also involved in deuterosome-mediated centriole amplification in multiciliated that can generate more than 100 centrioles. Also involved in trophoblast differentiation by phosphorylating HAND1, leading to disrupt the interaction between HAND1 and MDFIC and activate HAND1. Phosphorylates CDC25C and CHEK2. Required for the recruitment of STIL to the centriole and for STIL-mediated centriole amplification. Phosphorylates CEP131 at 'Ser-78' and PCM1 at 'Ser-372' which is essential for proper organization and integrity of centriolar satellites. The protein is Serine/threonine-protein kinase PLK4 of Homo sapiens (Human).